A 129-amino-acid polypeptide reads, in one-letter code: UPF0225 protein XC_4246 (129 aa).

The protein belongs to the UPF0225 family.

This Xanthomonas campestris pv. campestris (strain 8004) protein is UPF0225 protein XC_4246.